The sequence spans 234 residues: Purine nucleoside phosphorylase DeoD-type (234 aa).

His-4 provides a ligand contact to a purine D-ribonucleoside. Phosphate is bound by residues Gly-20, Arg-24, Arg-43, and 87-90 (RVGT). A purine D-ribonucleoside-binding positions include Glu-162, 178-180 (EME), and 202-203 (SD). The Proton donor role is filled by Asp-203.

It belongs to the PNP/UDP phosphorylase family. Homohexamer; trimer of homodimers.

The catalysed reaction is a purine D-ribonucleoside + phosphate = a purine nucleobase + alpha-D-ribose 1-phosphate. It carries out the reaction a purine 2'-deoxy-D-ribonucleoside + phosphate = a purine nucleobase + 2-deoxy-alpha-D-ribose 1-phosphate. Catalyzes the reversible phosphorolytic breakdown of the N-glycosidic bond in the beta-(deoxy)ribonucleoside molecules, with the formation of the corresponding free purine bases and pentose-1-phosphate. The chain is Purine nucleoside phosphorylase DeoD-type from Anoxybacillus flavithermus (strain DSM 21510 / WK1).